A 327-amino-acid chain; its full sequence is Ribonucleoside-diphosphate reductase small chain (327 aa).

Fe cation is bound by residues Asp-70, Glu-101, and His-104. Residue Tyr-108 is part of the active site. Fe cation contacts are provided by Glu-164, Glu-198, and His-201.

It belongs to the ribonucleoside diphosphate reductase small chain family. In terms of assembly, heterotetramer composed of a homodimer of the large subunit (R1) and a homodimer of the small subunit (R2). Larger multisubunit protein complex are also active, composed of (R1)n(R2)n. Fe cation is required as a cofactor.

The enzyme catalyses a 2'-deoxyribonucleoside 5'-diphosphate + [thioredoxin]-disulfide + H2O = a ribonucleoside 5'-diphosphate + [thioredoxin]-dithiol. Its function is as follows. Ribonucleoside-diphosphate reductase holoenzyme provides the precursors necessary for viral DNA synthesis. Allows virus growth in non-dividing cells. Catalyzes the biosynthesis of deoxyribonucleotides from the corresponding ribonucleotides. In African swine fever virus (isolate Tick/South Africa/Pretoriuskop Pr4/1996) (ASFV), this protein is Ribonucleoside-diphosphate reductase small chain.